A 703-amino-acid polypeptide reads, in one-letter code: Ion-translocating oxidoreductase complex subunit C (703 aa).

2 consecutive 4Fe-4S ferredoxin-type domains span residues 368 to 397 and 407 to 436; these read MAPQ…QQLY and KARN…VQYY. The [4Fe-4S] cluster site is built by C377, C380, C383, C387, C416, C419, C422, and C426. 2 disordered regions span residues 505–558 and 653–674; these read AVPA…EDPR and AQQA…EEDP. Residues 524–539 show a composition bias toward basic and acidic residues; the sequence is AAREARKAQARERRAQ.

The protein belongs to the 4Fe4S bacterial-type ferredoxin family. RnfC subfamily. In terms of assembly, the complex is composed of six subunits: RnfA, RnfB, RnfC, RnfD, RnfE and RnfG. It depends on [4Fe-4S] cluster as a cofactor.

Its subcellular location is the cell inner membrane. Part of a membrane-bound complex that couples electron transfer with translocation of ions across the membrane. In Serratia proteamaculans (strain 568), this protein is Ion-translocating oxidoreductase complex subunit C.